Here is a 495-residue protein sequence, read N- to C-terminus: Growth/differentiation factor 5 (495 aa).

The first 27 residues, Met-1 to Gly-27, serve as a signal peptide directing secretion. Positions Ala-28–Arg-375 are excised as a propeptide. Positions Asp-30–Thr-162 are disordered. Low complexity predominate over residues Gly-124 to Ser-137. Residues Lys-142–Phe-156 are compositionally biased toward basic and acidic residues. N-linked (GlcNAc...) asparagine glycosylation occurs at Asn-183. Cystine bridges form between Cys-394-Cys-460, Cys-423-Cys-492, and Cys-427-Cys-494.

It belongs to the TGF-beta family. In terms of assembly, homodimer; disulfide-linked. Interacts with serine proteases, HTRA1 and HTRA3. Following LPS binding, may form a complex with CXCR4, HSP90AA1 and HSPA8. Interacts with high affinity with NOG; inhibits chondrogenesis. Interacts with high affinity with BMPR1B and lower affinity with BMPR1A; positively regulates chondrocyte differentiation and induces SMAD-dependent signaling. Interacts with FBN1 (via N-terminal domain) and FBN2. Interacts with TGFBR3.

Its subcellular location is the secreted. The protein resides in the cell membrane. Its function is as follows. Growth factor involved in bone and cartilage formation. During cartilage development regulates differentiation of chondrogenic tissue through two pathways. Firstly, positively regulates differentiation of chondrogenic tissue through its binding of high affinity with BMPR1B and of less affinity with BMPR1A, leading to induction of SMAD1-SMAD5-SMAD8 complex phosphorylation and then SMAD protein signaling transduction. Secondly, negatively regulates chondrogenic differentiation through its interaction with NOG. Required to prevent excessive muscle loss upon denervation. This function requires SMAD4 and is mediated by phosphorylated SMAD1/5/8. Binds bacterial lipopolysaccharide (LPS) and mediates LPS-induced inflammatory response, including TNF secretion by monocytes. The protein is Growth/differentiation factor 5 (Gdf5) of Mus musculus (Mouse).